Consider the following 43-residue polypeptide: Protein PsbN 2 (43 aa).

Residues 4-24 traverse the membrane as a helical segment; the sequence is ATILGISIAAALVGITVLALY.

This sequence belongs to the PsbN family.

It is found in the cellular thylakoid membrane. In terms of biological role, may play a role in photosystem I and II biogenesis. The protein is Protein PsbN 2 of Microcystis aeruginosa (strain NIES-843 / IAM M-2473).